A 289-amino-acid chain; its full sequence is Undecaprenyl-diphosphatase (289 aa).

8 helical membrane passes run 23–43 (LFLG…TAHL), 56–76 (GVAV…AYFW), 104–124 (SAIV…KLFW), 135–155 (IPAI…AENV), 165–185 (LSFW…IPGV), 210–230 (FLLG…QAFG), 235–255 (VDVF…WIAI), and 269–289 (IFIT…YLAF).

This sequence belongs to the UppP family.

It localises to the cell inner membrane. The catalysed reaction is di-trans,octa-cis-undecaprenyl diphosphate + H2O = di-trans,octa-cis-undecaprenyl phosphate + phosphate + H(+). Its function is as follows. Catalyzes the dephosphorylation of undecaprenyl diphosphate (UPP). Confers resistance to bacitracin. The sequence is that of Undecaprenyl-diphosphatase from Prochlorococcus marinus (strain SARG / CCMP1375 / SS120).